The primary structure comprises 339 residues: Dihydroorotase (339 aa).

Positions 12 and 14 each coordinate Zn(2+). Residues 14–16 (HVR) and asparagine 40 each bind substrate. 4 residues coordinate Zn(2+): lysine 94, histidine 133, histidine 167, and aspartate 239. Lysine 94 is subject to N6-carboxylysine. Histidine 133 serves as a coordination point for substrate. Aspartate 239 is an active-site residue. Residues histidine 243 and alanine 255 each coordinate substrate.

Belongs to the metallo-dependent hydrolases superfamily. DHOase family. Class II DHOase subfamily. Homodimer. It depends on Zn(2+) as a cofactor.

The enzyme catalyses (S)-dihydroorotate + H2O = N-carbamoyl-L-aspartate + H(+). It participates in pyrimidine metabolism; UMP biosynthesis via de novo pathway; (S)-dihydroorotate from bicarbonate: step 3/3. Its function is as follows. Catalyzes the reversible cyclization of carbamoyl aspartate to dihydroorotate. The chain is Dihydroorotase from Helicobacter pylori (strain ATCC 700392 / 26695) (Campylobacter pylori).